We begin with the raw amino-acid sequence, 250 residues long: MATHTEQLTRPAVRLQGLTRSFADRTVLDGIDLDLPAGQFTALLGHSGSGKSTLLRAVAGLDHEVTGSGQLTAPERVSVVFQDSRLLPWRRVLDNVLLGTDGKEAAERGRAALAEVGLAGRERAWPGELSGGEAQRAALARSLVREPELLLADEPFGALDALTRIRMHTLLRELWERHRPSVLLVTHDVDEAIVLADRVLVLERGRIGLDLTIDRPHPRSYRDPLLGEYRERLLTALGVTEHQGAQEDHQ.

Residues 13–229 (VRLQGLTRSF…SYRDPLLGEY (217 aa)) form the ABC transporter domain. 45-52 (GHSGSGKS) lines the ATP pocket.

The protein belongs to the ABC transporter superfamily. Aliphatic sulfonates importer (TC 3.A.1.17.2) family. The complex is composed of two ATP-binding proteins (SsuB), two transmembrane proteins (SsuC) and a solute-binding protein (SsuA).

It is found in the cell membrane. It catalyses the reaction ATP + H2O + aliphatic sulfonate-[sulfonate-binding protein]Side 1 = ADP + phosphate + aliphatic sulfonateSide 2 + [sulfonate-binding protein]Side 1.. Part of the ABC transporter complex SsuABC involved in aliphatic sulfonates import. Responsible for energy coupling to the transport system. The chain is Aliphatic sulfonates import ATP-binding protein SsuB 2 from Streptomyces avermitilis (strain ATCC 31267 / DSM 46492 / JCM 5070 / NBRC 14893 / NCIMB 12804 / NRRL 8165 / MA-4680).